The chain runs to 61 residues: Beta-insect depressant toxin BmKIT2 (61 aa).

The region spanning 1–61 (DGYIKGKSGC…TWKSESNTCG (61 aa)) is the LCN-type CS-alpha/beta domain. Intrachain disulfides connect C10–C60, C14–C35, C21–C42, and C25–C44. The residue at position 61 (G61) is a Glycine amide.

The protein belongs to the long (4 C-C) scorpion toxin superfamily. Sodium channel inhibitor family. Beta subfamily. As to expression, expressed by the venom gland.

The protein resides in the secreted. Its function is as follows. On insects, this depressant beta-toxins cause a transient contraction paralysis followed by a slow flaccid paralysis. They bind voltage-independently at site-4 of sodium channels (Nav) and shift the voltage of activation toward more negative potentials thereby affecting sodium channel activation and promoting spontaneous and repetitive firing. This toxin is active against insects and mammals. It is capable of binding to not only cockroach neuronal membranes, but also rat cerebrocortical and hippocampal synaptosomes. This toxin also has potent peripheral and central suppressive effects on rat nociceptive spontaneous responses, thermal hyperalgesia and spinal c-Fos expression induced by formalin and carrageenan, which may be derived from its modulation on the activity of sodium channels of the neurons. Administration of BmKIT2 into rat brain can also suppress the epileptic seizures significantly. The protein is Beta-insect depressant toxin BmKIT2 of Olivierus martensii (Manchurian scorpion).